We begin with the raw amino-acid sequence, 286 residues long: UPF0173 metal-dependent hydrolase RALTA_A1748 (286 aa).

The protein belongs to the UPF0173 family.

This chain is UPF0173 metal-dependent hydrolase RALTA_A1748, found in Cupriavidus taiwanensis (strain DSM 17343 / BCRC 17206 / CCUG 44338 / CIP 107171 / LMG 19424 / R1) (Ralstonia taiwanensis (strain LMG 19424)).